The sequence spans 316 residues: Transaldolase (316 aa).

The Schiff-base intermediate with substrate role is filled by Lys125.

This sequence belongs to the transaldolase family. Type 1 subfamily. As to quaternary structure, homodimer.

The protein localises to the cytoplasm. The enzyme catalyses D-sedoheptulose 7-phosphate + D-glyceraldehyde 3-phosphate = D-erythrose 4-phosphate + beta-D-fructose 6-phosphate. Its pathway is carbohydrate degradation; pentose phosphate pathway; D-glyceraldehyde 3-phosphate and beta-D-fructose 6-phosphate from D-ribose 5-phosphate and D-xylulose 5-phosphate (non-oxidative stage): step 2/3. Functionally, transaldolase is important for the balance of metabolites in the pentose-phosphate pathway. This is Transaldolase from Acidovorax ebreus (strain TPSY) (Diaphorobacter sp. (strain TPSY)).